The sequence spans 74 residues: Translation initiation factor IF-1 2 (74 aa).

Residues 1–73 (MTKNKNVIEV…TRGRIVFRYR (73 aa)) form the S1-like domain.

This sequence belongs to the IF-1 family. As to quaternary structure, component of the 30S ribosomal translation pre-initiation complex which assembles on the 30S ribosome in the order IF-2 and IF-3, IF-1 and N-formylmethionyl-tRNA(fMet); mRNA recruitment can occur at any time during PIC assembly.

Its subcellular location is the cytoplasm. One of the essential components for the initiation of protein synthesis. Stabilizes the binding of IF-2 and IF-3 on the 30S subunit to which N-formylmethionyl-tRNA(fMet) subsequently binds. Helps modulate mRNA selection, yielding the 30S pre-initiation complex (PIC). Upon addition of the 50S ribosomal subunit IF-1, IF-2 and IF-3 are released leaving the mature 70S translation initiation complex. This is Translation initiation factor IF-1 2 from Streptomyces avermitilis (strain ATCC 31267 / DSM 46492 / JCM 5070 / NBRC 14893 / NCIMB 12804 / NRRL 8165 / MA-4680).